A 127-amino-acid polypeptide reads, in one-letter code: UPF0102 protein ERGA_CDS_00540 (127 aa).

The protein belongs to the UPF0102 family.

The sequence is that of UPF0102 protein ERGA_CDS_00540 from Ehrlichia ruminantium (strain Gardel).